Consider the following 157-residue polypeptide: Transcription elongation factor GreA (157 aa).

Residues 46–73 are a coiled coil; it reads AEYHSARERQSFIEGRIAELEEIISAAE.

The protein belongs to the GreA/GreB family.

Functionally, necessary for efficient RNA polymerase transcription elongation past template-encoded arresting sites. The arresting sites in DNA have the property of trapping a certain fraction of elongating RNA polymerases that pass through, resulting in locked ternary complexes. Cleavage of the nascent transcript by cleavage factors such as GreA or GreB allows the resumption of elongation from the new 3'terminus. GreA releases sequences of 2 to 3 nucleotides. This Acidiphilium cryptum (strain JF-5) protein is Transcription elongation factor GreA.